The primary structure comprises 235 residues: Chromosome partition protein MukE (235 aa).

Residues 204–235 (QQEPSQSSLLDGFDADDTGHHDSELTMQEGEV) are disordered.

The protein belongs to the MukE family. In terms of assembly, interacts, and probably forms a ternary complex, with MukF and MukB. The complex formation is stimulated by calcium or magnesium.

It is found in the cytoplasm. Its subcellular location is the nucleoid. In terms of biological role, involved in chromosome condensation, segregation and cell cycle progression. May participate in facilitating chromosome segregation by condensation DNA from both sides of a centrally located replisome during cell division. Probably acts via its interaction with MukB and MukF. This chain is Chromosome partition protein MukE, found in Photobacterium profundum (strain SS9).